The sequence spans 142 residues: Small ribosomal subunit protein bS6 (142 aa).

Residues 110–133 show a composition bias toward basic and acidic residues; the sequence is NKKPSHAKEKHEKTEHTHSHHLEE. The tract at residues 110-142 is disordered; that stretch reads NKKPSHAKEKHEKTEHTHSHHLEEAESVGSHSE.

It belongs to the bacterial ribosomal protein bS6 family.

In terms of biological role, binds together with bS18 to 16S ribosomal RNA. The protein is Small ribosomal subunit protein bS6 of Helicobacter pylori (strain HPAG1).